The sequence spans 315 residues: MTAVESRPAGVIGTSQSPSHRPFGARVKAFVALTKPRIIELLLITTVPVMFLAEQGVPNLKLVLLTCVGGYLSAGGANALNMYIDRDIDALMDRTSQRPLVTGMVSPVECLVFGITLAIVSTLLFGFTVNWLSAWLSLGALLFYVVVYTMILKRRTSQNIVWGGIAGCLPVLIGWSAVTNSMSWAPVILFGVMFFWTPPHYWPLSMKVKEDYARVGVPMLPVIASNKVVARQIVIYSWVMVVVSLLLQPLGYTGWFYTAVALAAGGMWLWEAHGLQNRAKAEVTGGKLKEMRLFHWSITYVSVLFLAIAVDPFLR.

Helical transmembrane passes span Ile38 to Pro58, Leu62 to Met82, Leu111 to Trp131, Leu132 to Leu152, Asn159 to Thr179, Trp184 to Leu204, Ile233 to Thr253, Trp255 to Leu275, and Leu293 to Phe313.

The protein belongs to the UbiA prenyltransferase family. Protoheme IX farnesyltransferase subfamily.

Its subcellular location is the cell membrane. The enzyme catalyses heme b + (2E,6E)-farnesyl diphosphate + H2O = Fe(II)-heme o + diphosphate. The protein operates within porphyrin-containing compound metabolism; heme O biosynthesis; heme O from protoheme: step 1/1. In terms of biological role, converts heme B (protoheme IX) to heme O by substitution of the vinyl group on carbon 2 of heme B porphyrin ring with a hydroxyethyl farnesyl side group. This is Protoheme IX farnesyltransferase from Streptomyces coelicolor (strain ATCC BAA-471 / A3(2) / M145).